A 107-amino-acid polypeptide reads, in one-letter code: Iron-binding protein IscA (107 aa).

Fe cation-binding residues include Cys35, Cys99, and Cys101.

This sequence belongs to the HesB/IscA family. As to quaternary structure, homodimer; may form tetramers and higher multimers. Fe cation serves as cofactor.

Is able to transfer iron-sulfur clusters to apo-ferredoxin. Multiple cycles of [2Fe2S] cluster formation and transfer are observed, suggesting that IscA acts catalytically. Recruits intracellular free iron so as to provide iron for the assembly of transient iron-sulfur cluster in IscU in the presence of IscS, L-cysteine and the thioredoxin reductase system TrxA/TrxB. The sequence is that of Iron-binding protein IscA from Photorhabdus laumondii subsp. laumondii (strain DSM 15139 / CIP 105565 / TT01) (Photorhabdus luminescens subsp. laumondii).